A 452-amino-acid polypeptide reads, in one-letter code: UPF0210 protein Hore_14430 (452 aa).

The protein belongs to the UPF0210 family. In terms of assembly, homodimer.

This chain is UPF0210 protein Hore_14430, found in Halothermothrix orenii (strain H 168 / OCM 544 / DSM 9562).